The sequence spans 198 residues: Syndecan-4 (198 aa).

Positions 1–18 are cleaved as a signal peptide; sequence MAPARLFALLLFFVGGVA. Over 19 to 145 the chain is Extracellular; the sequence is ESIRETEVID…QGSNIFERTE (127 aa). O-linked (Xyl...) (glycosaminoglycan) serine glycosylation is found at Ser-39, Ser-61, and Ser-63. An O-linked (Xyl...) (chondroitin sulfate) serine glycan is attached at Ser-95. A helical transmembrane segment spans residues 146–170; sequence VLAALIVGGIVGILFAVFLILLLMY. The Cytoplasmic portion of the chain corresponds to 171-198; it reads RMKKKDEGSYDLGKKPIYKKAPTNEFYA.

This sequence belongs to the syndecan proteoglycan family. Homodimer. Interacts (via its cytoplasmic domain) with GIPC (via its PDZ domain). Interacts (via its cytoplasmic domain) with NUDT16L1. Interacts with CDCP1 and SDCBP. Interacts with DNM2; this interaction is markedly enhanced at focal ahesion site upon induction of focal adhesions and stress-fiber formation. In terms of processing, shedding is enhanced by a number of factors such as heparanase, thrombin or EGF. Also by stress and wound healing. PMA-mediated shedding is inhibited by TIMP3. Post-translationally, O-glycosylated; contains both chondroitin sulfate and heparan sulfate. Ser-39, Ser-61 and Ser-63 can all be modified by either chondroitin sulfate or heparan sulfate, and the protein exists in forms that contain only chondroitin sulfate, only heparan sulfate and both chondroitin sulfate and heparan sulfate. In terms of tissue distribution, detected in fibroblasts (at protein level). Also expressed in epithelial cells.

It is found in the membrane. The protein localises to the secreted. Cell surface proteoglycan which regulates exosome biogenesis in concert with SDCBP and PDCD6IP. The sequence is that of Syndecan-4 from Homo sapiens (Human).